The primary structure comprises 152 residues: MAGSPNEDSEGSRITYVKGDLFACPQTDSLVHCISEDCRMGAGIAVLFKKKFGGVQELLNQQKKSGEVAVLKRDGRYIYYLITKKRASHKPTYENLRKSLEAMKSHCLKNGVTDLSMPRIGCGLDRLQWENVSAIIEEVFEATDIRITVYTL.

A2 is modified (N-acetylalanine). Positions 2–152 (AGSPNEDSEG…TDIRITVYTL (151 aa)) constitute a Macro domain. S4 is modified (phosphoserine). Residue L21 coordinates substrate. K84 acts as the Nucleophile in catalysis. Substrate is bound by residues 119 to 125 (RIGCGLD) and L152. The active-site Proton acceptor is D125.

The protein localises to the nucleus. Its subcellular location is the nucleoplasm. It localises to the nucleolus. It is found in the chromosome. The catalysed reaction is 2''-O-acetyl-ADP-D-ribose + H2O = ADP-D-ribose + acetate + H(+). The enzyme catalyses 5-O-(ADP-D-ribosyl)-L-glutamyl-[protein] + H2O = L-glutamyl-[protein] + ADP-D-ribose + H(+). It carries out the reaction alpha-NAD(+) + H2O = ADP-D-ribose + nicotinamide + H(+). With respect to regulation, subject to competitive inhibition by the product ADP-ribose. ADP-ribose glycohydrolase that hydrolyzes ADP-ribose and acts on different substrates, such as proteins ADP-ribosylated on glutamate and O-acetyl-ADP-D-ribose. Specifically acts as a glutamate mono-ADP-ribosylhydrolase by mediating the removal of mono-ADP-ribose attached to glutamate residues on proteins. Does not act on poly-ADP-ribosylated proteins: the poly-ADP-ribose chain of poly-ADP-ribosylated glutamate residues must by hydrolyzed into mono-ADP-ribosylated glutamate by PARG to become a substrate for OARD1. Deacetylates O-acetyl-ADP ribose, a signaling molecule generated by the deacetylation of acetylated lysine residues in histones and other proteins. Catalyzes the deacylation of O-acetyl-ADP-ribose, O-propionyl-ADP-ribose and O-butyryl-ADP-ribose, yielding ADP-ribose plus acetate, propionate and butyrate, respectively. The chain is ADP-ribose glycohydrolase OARD1 from Bos taurus (Bovine).